Reading from the N-terminus, the 594-residue chain is Protein wntless (594 aa).

Topologically, residues 1-13 (MSGTILENLSGRK) are cytoplasmic. Residues 14–34 (LSILVATLLLCQVLCFLLGGL) form a helical membrane-spanning segment. At 35–239 (YAPLPAGHVT…AIHQNGGFTQ (205 aa)) the chain is on the lumenal side. Asn-58 carries N-linked (GlcNAc...) asparagine glycosylation. A helical membrane pass occupies residues 240–260 (IWLLLKTMLFPFVVGIMIWFW). Residues 261–270 (RRVHLLQRSP) are Cytoplasmic-facing. A helical membrane pass occupies residues 271–291 (ALLEYMLIYLGAALTFLNLPL). The Lumenal portion of the chain corresponds to 292–311 (EYLSLVYEMPYMLLLSDIRQ). Residues 312-332 (GIFYAMLLTFWLVFAGEHMLI) traverse the membrane as a helical segment. Topologically, residues 333–344 (QDAPNKSTIRSR) are cytoplasmic. The chain crosses the membrane as a helical span at residues 345 to 365 (YWKHLSAVVVGCISLFVFDIC). At 366-390 (ERGVQLRNPFYSIWTTPLGAKVAMT) the chain is on the lumenal side. Residues 391-411 (FIVLAGVSAAIYFLFLCYMIW) form a helical membrane-spanning segment. The Cytoplasmic segment spans residues 412–473 (KVFRNIGDKR…ANESKGLIYR (62 aa)). Residues 474–494 (FKFLMLATLVCAALTVAGFIM) form a helical membrane-spanning segment. Over 495–514 (GQMAEGQWDWNDNVAIQPTS) the chain is Lumenal. Residues 515–535 (AFLTGVYGMWNIYIFALLILY) form a helical membrane-spanning segment. Residues 536–594 (APSHKQWPTMHHSDETTQSNENIVASAASEEIEFSHLPSDSNPSEISSLTSFTRKVAFD) lie on the Cytoplasmic side of the membrane. A disordered region spans residues 571 to 594 (HLPSDSNPSEISSLTSFTRKVAFD). Residues 573-588 (PSDSNPSEISSLTSFT) show a composition bias toward polar residues.

The protein belongs to the wntless family. As to quaternary structure, interacts with wg; in the Golgi. Interacts with Vps35, a component of the retromer complex; wls stability is regulated by Vps35. As to expression, ubiquitously expressed in the wing imaginal disk, increased expression is observed in a stripe at the dorso-ventral boundary and other regions of the wing disk that express wg. Also expresses in the leg imaginal disk. During larval development, expression is seen in both motorneurons and muscle.

The protein localises to the presynaptic cell membrane. The protein resides in the postsynaptic cell membrane. It is found in the cell membrane. It localises to the endosome membrane. Its subcellular location is the endoplasmic reticulum membrane. The protein localises to the golgi apparatus membrane. Functionally, a segment polarity gene required for wingless (wg)-dependent patterning processes, acting in both wg-sending cells and wg-target cells. In non-neuronal cells wls directs wg secretion. The wls traffic loop encompasses the Golgi, the cell surface, an endocytic compartment and a retrograde route leading back to the Golgi, and involves clathrin-mediated endocytosis and the retromer complex (a conserved protein complex consisting of Vps35 and Vps26). In neuronal cells (the larval motorneuron NMJ), the wg signal moves across the synapse via the release of wls-containing exosome-like vesicles. Postsynaptic wls is required for the trafficking of fz2 through the fz2-interacting protein Grip. This is Protein wntless from Drosophila melanogaster (Fruit fly).